We begin with the raw amino-acid sequence, 542 residues long: Chaperonin GroEL 2 (542 aa).

Residues Thr-30 to Pro-33, Lys-51, Asp-87 to Thr-91, Gly-415, and Asp-496 contribute to the ATP site.

It belongs to the chaperonin (HSP60) family. Forms a cylinder of 14 subunits composed of two heptameric rings stacked back-to-back. Interacts with the co-chaperonin GroES.

Its subcellular location is the cytoplasm. The catalysed reaction is ATP + H2O + a folded polypeptide = ADP + phosphate + an unfolded polypeptide.. Together with its co-chaperonin GroES, plays an essential role in assisting protein folding. The GroEL-GroES system forms a nano-cage that allows encapsulation of the non-native substrate proteins and provides a physical environment optimized to promote and accelerate protein folding. This is Chaperonin GroEL 2 from Rhizobium meliloti (strain 1021) (Ensifer meliloti).